The sequence spans 327 residues: Tetraacyldisaccharide 4'-kinase (327 aa).

56 to 63 (FVGGTGKT) lines the ATP pocket.

Belongs to the LpxK family.

It carries out the reaction a lipid A disaccharide + ATP = a lipid IVA + ADP + H(+). Its pathway is glycolipid biosynthesis; lipid IV(A) biosynthesis; lipid IV(A) from (3R)-3-hydroxytetradecanoyl-[acyl-carrier-protein] and UDP-N-acetyl-alpha-D-glucosamine: step 6/6. Transfers the gamma-phosphate of ATP to the 4'-position of a tetraacyldisaccharide 1-phosphate intermediate (termed DS-1-P) to form tetraacyldisaccharide 1,4'-bis-phosphate (lipid IVA). This chain is Tetraacyldisaccharide 4'-kinase, found in Halorhodospira halophila (strain DSM 244 / SL1) (Ectothiorhodospira halophila (strain DSM 244 / SL1)).